Consider the following 71-residue polypeptide: BBSome-interacting protein 1 (71 aa).

The protein belongs to the BBIP10 family.

It localises to the cell projection. Its subcellular location is the cilium. It is found in the cytoplasm. In terms of biological role, required for primary cilia assembly. This chain is BBSome-interacting protein 1 (bbip1), found in Nematostella vectensis (Starlet sea anemone).